Consider the following 398-residue polypeptide: Cysteine protease ATG4A (398 aa).

C77 (nucleophile) is an active-site residue. Residues D279 and H281 contribute to the active site. The short motif at 393 to 396 (FEIL) is the LIR element.

This sequence belongs to the peptidase C54 family. As to quaternary structure, interacts with ATG9A; the interaction is direct.

It is found in the cytoplasm. The enzyme catalyses [protein]-C-terminal L-amino acid-glycyl-phosphatidylethanolamide + H2O = [protein]-C-terminal L-amino acid-glycine + a 1,2-diacyl-sn-glycero-3-phosphoethanolamine. Inhibited by N-ethylmaleimide. Redox-regulated during autophagy since reducing conditions activate ATG4A whereas an oxidizing environment such as the presence of H(2)O(2) inhibits its activity. Functionally, cysteine protease that plays a key role in autophagy by mediating both proteolytic activation and delipidation of ATG8 family proteins. The protease activity is required for proteolytic activation of ATG8 family proteins: cleaves the C-terminal amino acid of ATG8 proteins to reveal a C-terminal glycine. Exposure of the glycine at the C-terminus is essential for ATG8 proteins conjugation to phosphatidylethanolamine (PE) and insertion to membranes, which is necessary for autophagy. Preferred substrate is GABARAPL2 followed by MAP1LC3A and GABARAP. Protease activity is also required to counteract formation of high-molecular weight conjugates of ATG8 proteins (ATG8ylation): acts as a deubiquitinating-like enzyme that removes ATG8 conjugated to other proteins, such as ATG3. In addition to the protease activity, also mediates delipidation of ATG8 family proteins. Catalyzes delipidation of PE-conjugated forms of ATG8 proteins during macroautophagy. Compared to ATG4B, the major protein for proteolytic activation of ATG8 proteins, shows weaker ability to cleave the C-terminal amino acid of ATG8 proteins, while it displays stronger delipidation activity. Involved in phagophore growth during mitophagy independently of its protease activity and of ATG8 proteins: acts by regulating ATG9A trafficking to mitochondria and promoting phagophore-endoplasmic reticulum contacts during the lipid transfer phase of mitophagy. This is Cysteine protease ATG4A from Homo sapiens (Human).